The primary structure comprises 591 residues: Dolichyl-phosphooligosaccharide-protein glycotransferase 1 (591 aa).

Residues 1–5 (MDRKV) are Cytoplasmic-facing. A helical transmembrane segment spans residues 6 to 26 (LMLAVILFALAVRFQNFGEIF). The Extracellular segment spans residues 27–67 (DSGIYYTGYDSYYHMRLVEVMVKESFRPDYDYYINYPFGLK). Residues 34–36 (GYD) carry the DXD motif 1 motif. Asp36 contributes to the Mn(2+) binding site. The chain crosses the membrane as a helical span at residues 68-88 (ITWPPLFDYILAFPGMLFGFH). The Cytoplasmic segment spans residues 89–91 (SSE). The helical transmembrane segment at 92–112 (IFAVFLPVILGVLSVVLICLT) threads the bilayer. Topologically, residues 113–121 (ALQIVNNQT) are extracellular. Residues 122–142 (FALISAFIYAAAPVAVWKTVL) traverse the membrane as a helical segment. Residues 143–147 (GQADH) are Cytoplasmic-facing. Mn(2+) is bound at residue Asp146. The DXD motif 2 motif lies at 146 to 148 (DHH). Residue His147 coordinates a glycophospholipid. A Mn(2+)-binding site is contributed by His148. The helical transmembrane segment at 148–168 (HALVIFLFLLSAYLLLKDGVW) threads the bilayer. A topological domain (extracellular) is located at residue Lys169. The helical transmembrane segment at 170–190 (ILAGLPMLFMALAWLGSPIYG) threads the bilayer. The Cytoplasmic portion of the chain corresponds to 191–219 (ALLAFSALVHFDRKALRLVAASYLIPAIS). The chain crosses the membrane as a helical span at residues 220–240 (FVLYPPVGISFFGLAAFLFVG). Residues 241–252 (SVVKGYEDRFRN) are Extracellular-facing. The chain crosses the membrane as a helical span at residues 253–273 (ATIYYIALSLATVLIIYFIPL). At 274–275 (PH) the chain is on the cytoplasmic side. Residues 276–296 (FEFVKGGINYIFGANIYLPTI) form a helical membrane-spanning segment. Residues 295 to 298 (TISE) carry the TIXE motif motif. The Extracellular segment spans residues 297–303 (SEARSLQ). A helical membrane pass occupies residues 304–324 (IFEIISASGYIYFIFALISVL). The Cytoplasmic portion of the chain corresponds to 325-327 (FFR). Residues 328–344 (NRFVLSMFFLSFILALM) form a helical membrane-spanning segment. The Extracellular portion of the chain corresponds to 345 to 347 (QLR). Arg347 contacts a glycophospholipid. The chain crosses the membrane as a helical span at residues 348-368 (FTEVLVVPSALLSAYLVSLVL). Over 369-408 (ERLEYPVFEKADEEEKSRRRKRKDRKVKQKNAEVEWKDHA) the chain is Cytoplasmic. The helical transmembrane segment at 409 to 429 (VVAAFLVILAIPCIVVAVVPF) threads the bilayer. Over 430-591 (DLTEDWKEAL…DVKIFEVVGS (162 aa)) the chain is Extracellular. The segment at 465–467 (WWD) is interacts with target acceptor peptide in protein substrate. The WWDYG motif motif lies at 465–469 (WWDYG). The short motif at 521–535 (EITMKDANNTKFPAI) is the DKi motif element.

The protein belongs to the STT3 family. The cofactor is Mn(2+). Requires Mg(2+) as cofactor. It depends on Zn(2+) as a cofactor.

The protein resides in the cell membrane. The enzyme catalyses an archaeal dolichyl phosphooligosaccharide + [protein]-L-asparagine = an archaeal dolichyl phosphate + a glycoprotein with the oligosaccharide chain attached by N-beta-D-glycosyl linkage to a protein L-asparagine.. Its pathway is protein modification; protein glycosylation. Its function is as follows. Oligosaccharyl transferase (OST) that catalyzes the initial transfer of a defined glycan (a GalNAc-linked heptasaccharide composed of 4 Hex, 3 dHex and a sulfate for A.fulgidus AglB-S) from the lipid carrier dolichol-monophosphate to an asparagine residue within an Asn-X-Ser/Thr consensus motif in nascent polypeptide chains, the first step in protein N-glycosylation. The polypeptide is Dolichyl-phosphooligosaccharide-protein glycotransferase 1 (aglB1) (Archaeoglobus fulgidus (strain ATCC 49558 / DSM 4304 / JCM 9628 / NBRC 100126 / VC-16)).